Here is a 911-residue protein sequence, read N- to C-terminus: Protein translocase subunit SecA (911 aa).

Residues Gln86, 104 to 108, and Asp512 contribute to the ATP site; that span reads GEGKT. The interval 869–888 is disordered; the sequence is ALADDGQPQGAQPVRNVLPK. The Zn(2+) site is built by Cys895, Cys897, Cys906, and His907.

The protein belongs to the SecA family. In terms of assembly, monomer and homodimer. Part of the essential Sec protein translocation apparatus which comprises SecA, SecYEG and auxiliary proteins SecDF-YajC and YidC. Zn(2+) serves as cofactor.

Its subcellular location is the cell inner membrane. It localises to the cytoplasm. It catalyses the reaction ATP + H2O + cellular proteinSide 1 = ADP + phosphate + cellular proteinSide 2.. Part of the Sec protein translocase complex. Interacts with the SecYEG preprotein conducting channel. Has a central role in coupling the hydrolysis of ATP to the transfer of proteins into and across the cell membrane, serving both as a receptor for the preprotein-SecB complex and as an ATP-driven molecular motor driving the stepwise translocation of polypeptide chains across the membrane. This is Protein translocase subunit SecA from Bordetella parapertussis (strain 12822 / ATCC BAA-587 / NCTC 13253).